The chain runs to 176 residues: NAD(P)H-quinone oxidoreductase subunit 6, chloroplastic (176 aa).

The next 5 helical transmembrane spans lie at 10–30 (FILV…VLLP), 32–52 (PIYS…LYIL), 61–81 (AQLL…VMFL), 95–115 (VGDG…ITTI), and 152–172 (FLIP…GAIA).

Belongs to the complex I subunit 6 family. As to quaternary structure, NDH is composed of at least 16 different subunits, 5 of which are encoded in the nucleus.

The protein resides in the plastid. Its subcellular location is the chloroplast thylakoid membrane. It catalyses the reaction a plastoquinone + NADH + (n+1) H(+)(in) = a plastoquinol + NAD(+) + n H(+)(out). The enzyme catalyses a plastoquinone + NADPH + (n+1) H(+)(in) = a plastoquinol + NADP(+) + n H(+)(out). Its function is as follows. NDH shuttles electrons from NAD(P)H:plastoquinone, via FMN and iron-sulfur (Fe-S) centers, to quinones in the photosynthetic chain and possibly in a chloroplast respiratory chain. The immediate electron acceptor for the enzyme in this species is believed to be plastoquinone. Couples the redox reaction to proton translocation, and thus conserves the redox energy in a proton gradient. The sequence is that of NAD(P)H-quinone oxidoreductase subunit 6, chloroplastic (ndhG) from Trachelium caeruleum (Blue throatwort).